The chain runs to 367 residues: MNVYTPDIDKLPNRDEAATALATLRAWAQTASAAEIETLDPSVARLLPGDPSDYPSLARAYPEEFSVDAAYKDSLPDLQNGPSSLIRGAKAQIQHVGISNFRLPIRFHTRDNGDVTLETSVTGSVSLEAEKKGINMSRIMRTFYGHADETFSFEVIERTLDAYKSDLESFDARIQMRFSFPMKVESLRSGLSGYQYYDIALEVVDVNGQRRKFMHLDYVYSSTCPCSLELSEHARQFRGQLATPHSQRSVARVSVELTCGADDCLWFEDLVELCREAIPTETQVMVKREDEQAFAELNAANPIFVEDAARSFCLALQRDDRIGDFRVVASHQESLHSHDAVSVLTEGPTFASDSLDPRLFQTLFHVG.

This sequence belongs to the GTP cyclohydrolase IV family.

The catalysed reaction is GTP + H2O = 7,8-dihydroneopterin 3'-triphosphate + formate + H(+). It participates in cofactor biosynthesis; 7,8-dihydroneopterin triphosphate biosynthesis; 7,8-dihydroneopterin triphosphate from GTP: step 1/1. In terms of biological role, converts GTP to 7,8-dihydroneopterin triphosphate. The protein is GTP cyclohydrolase FolE2 of Dinoroseobacter shibae (strain DSM 16493 / NCIMB 14021 / DFL 12).